A 416-amino-acid chain; its full sequence is uncharacterized protein (416 aa).

Zn(2+)-binding residues include histidine 29, aspartate 31, glutamate 144, histidine 215, and histidine 236.

The protein belongs to the metallo-dependent hydrolases superfamily. Peptidase M19 family. Zn(2+) serves as cofactor.

The enzyme catalyses an L-aminoacyl-L-amino acid + H2O = 2 an L-alpha-amino acid. This is an uncharacterized protein from Schizosaccharomyces pombe (strain 972 / ATCC 24843) (Fission yeast).